The following is a 25-amino-acid chain: Chlorocatechol 1,2-dioxygenase 1 (25 aa).

Belongs to the intradiol ring-cleavage dioxygenase family. The cofactor is Fe(3+).

It carries out the reaction 3,5-dichlorocatechol + O2 = (2E,4E)-2,4-dichloromuconate + 2 H(+). It functions in the pathway xenobiotic degradation; 2-(2,4-dichlorophenoxy)propanoate degradation. The protein is Chlorocatechol 1,2-dioxygenase 1 (tfdC) of Delftia acidovorans (Pseudomonas acidovorans).